A 561-amino-acid chain; its full sequence is Sesquiterpene synthase TPS2 (561 aa).

Positions 6 to 26 are disordered; it reads ANGHSDVPSTQPPIGKQKKEI. (2E,6E)-farnesyl diphosphate-binding residues include arginine 277, aspartate 314, aspartate 318, arginine 455, and aspartate 458. Aspartate 314 and aspartate 318 together coordinate Mg(2+). The DDXXD motif motif lies at 314–318; sequence DDTYD. Mg(2+) contacts are provided by aspartate 458, serine 462, and glutamate 466.

This sequence belongs to the terpene synthase family. Tpsa subfamily. In terms of assembly, monomer. Requires Mg(2+) as cofactor.

It localises to the cytoplasm. It carries out the reaction (2E,6E)-farnesyl diphosphate = beta-ylangene + diphosphate. The catalysed reaction is (2E,6E)-farnesyl diphosphate = beta-copaene + diphosphate. It catalyses the reaction (2E,6E)-farnesyl diphosphate = beta-cubebene + diphosphate. It functions in the pathway secondary metabolite biosynthesis; terpenoid biosynthesis. Its function is as follows. Sesquiterpene synthase involved in the biosynthesis of volatile organic compounds. Mediates the conversion of (2E,6E)-farnesyl diphosphate (FPP) into beta-ylangene, beta-copaene and beta-cubebene. Does not use (2E)-geranyl diphosphate (GPP) as substrate. This is Sesquiterpene synthase TPS2 from Cananga odorata (Ylang-ylang tree).